Here is an 867-residue protein sequence, read N- to C-terminus: Rifampicin phosphotransferase (867 aa).

The segment at 1 to 314 (MKPYVLKFQE…FYIVQSRPIT (314 aa)) is ATP-binding. Lys22, Arg117, Gly132, Thr136, Gln183, Glu297, Gln309, and Arg311 together coordinate ATP. Residues 327–754 (NRVYISVAHQ…TSDGEMINGE (428 aa)) form a rifampicin-binding region. Rifampicin contacts are provided by Gln336 and Tyr351. The interval 767–865 (GLPVSSGTVE…INGTEGYIEI (99 aa)) is swivel phosphohistidine. Catalysis depends on His825, which acts as the Tele-phosphohistidine intermediate.

It belongs to the rifampicin phosphotransferase family.

The enzyme catalyses rifampicin + ATP + H2O = 21-phosphorifampicin + AMP + phosphate + 2 H(+). In terms of biological role, catalyzes the phosphorylation of rifampicin, also known as rifampin (RIF), leading to its inactivation. Confers high level resistance to a variety of clinically used rifamycin antibiotics. Does not show phosphoenolpyruvate (PEP) synthase activity. The chain is Rifampicin phosphotransferase from Listeria monocytogenes serotype 4b (strain F2365).